Consider the following 156-residue polypeptide: ATP synthase subunit b (156 aa).

A helical membrane pass occupies residues 7-27; sequence IFFQMLVFFVLGWFTMKFVWP.

Belongs to the ATPase B chain family. As to quaternary structure, F-type ATPases have 2 components, F(1) - the catalytic core - and F(0) - the membrane proton channel. F(1) has five subunits: alpha(3), beta(3), gamma(1), delta(1), epsilon(1). F(0) has three main subunits: a(1), b(2) and c(10-14). The alpha and beta chains form an alternating ring which encloses part of the gamma chain. F(1) is attached to F(0) by a central stalk formed by the gamma and epsilon chains, while a peripheral stalk is formed by the delta and b chains.

The protein localises to the cell inner membrane. Its function is as follows. F(1)F(0) ATP synthase produces ATP from ADP in the presence of a proton or sodium gradient. F-type ATPases consist of two structural domains, F(1) containing the extramembraneous catalytic core and F(0) containing the membrane proton channel, linked together by a central stalk and a peripheral stalk. During catalysis, ATP synthesis in the catalytic domain of F(1) is coupled via a rotary mechanism of the central stalk subunits to proton translocation. In terms of biological role, component of the F(0) channel, it forms part of the peripheral stalk, linking F(1) to F(0). The protein is ATP synthase subunit b of Bordetella pertussis (strain Tohama I / ATCC BAA-589 / NCTC 13251).